A 794-amino-acid chain; its full sequence is Phosphoribosylformylglycinamidine synthase subunit PurL (794 aa).

Residue His47 is part of the active site. Residues Tyr50 and Lys89 each contribute to the ATP site. Residue Glu91 coordinates Mg(2+). Substrate-binding positions include 92 to 95 (SHNH) and Arg114. The Proton acceptor role is filled by His93. Asp115 lines the Mg(2+) pocket. Gln238 is a binding site for substrate. Asp266 contributes to the Mg(2+) binding site. Substrate is bound at residue 310–312 (ESQ). Asp522 and Gly559 together coordinate ATP. Asn560 contacts Mg(2+). Ser562 contributes to the substrate binding site.

The protein belongs to the FGAMS family. Monomer. Part of the FGAM synthase complex composed of 1 PurL, 1 PurQ and 2 PurS subunits.

The protein resides in the cytoplasm. The catalysed reaction is N(2)-formyl-N(1)-(5-phospho-beta-D-ribosyl)glycinamide + L-glutamine + ATP + H2O = 2-formamido-N(1)-(5-O-phospho-beta-D-ribosyl)acetamidine + L-glutamate + ADP + phosphate + H(+). The protein operates within purine metabolism; IMP biosynthesis via de novo pathway; 5-amino-1-(5-phospho-D-ribosyl)imidazole from N(2)-formyl-N(1)-(5-phospho-D-ribosyl)glycinamide: step 1/2. In terms of biological role, part of the phosphoribosylformylglycinamidine synthase complex involved in the purines biosynthetic pathway. Catalyzes the ATP-dependent conversion of formylglycinamide ribonucleotide (FGAR) and glutamine to yield formylglycinamidine ribonucleotide (FGAM) and glutamate. The FGAM synthase complex is composed of three subunits. PurQ produces an ammonia molecule by converting glutamine to glutamate. PurL transfers the ammonia molecule to FGAR to form FGAM in an ATP-dependent manner. PurS interacts with PurQ and PurL and is thought to assist in the transfer of the ammonia molecule from PurQ to PurL. This chain is Phosphoribosylformylglycinamidine synthase subunit PurL, found in Prochlorococcus marinus (strain MIT 9303).